A 139-amino-acid polypeptide reads, in one-letter code: Mannose-specific lectin (139 aa).

Positions 1 to 109 (DNILYSGETL…ARWATGTNIH (109 aa)) constitute a Bulb-type lectin domain. Glutamine 26, aspartate 28, asparagine 30, tyrosine 34, aspartate 37, lysine 38, tryptophan 41, alanine 42, asparagine 44, glutamine 57, aspartate 59, asparagine 61, tyrosine 65, isoleucine 72, tryptophan 73, asparagine 76, asparagine 83, glutamine 89, aspartate 91, asparagine 93, tyrosine 97, and tryptophan 102 together coordinate alpha-D-mannopyranose. An intrachain disulfide couples cysteine 29 to cysteine 52.

In terms of assembly, homotetramer; antiparallel. In terms of tissue distribution, detected in bulbs (at protein level).

It localises to the secreted. Its function is as follows. Mannose-specific lectin. Displays antiviral activity and therefore may contribute to defense against infections. Shows agglutinating activity towards rabbit erythrocytes. The protein is Mannose-specific lectin of Narcissus tazetta (Cream narcissus).